A 155-amino-acid chain; its full sequence is Ribosome maturation factor RimP (155 aa).

Belongs to the RimP family.

The protein localises to the cytoplasm. Functionally, required for maturation of 30S ribosomal subunits. This is Ribosome maturation factor RimP from Staphylococcus haemolyticus (strain JCSC1435).